The following is a 67-amino-acid chain: MPQLDTSTWFITILSMLMTLFILFQLKLSKHIYYPTPEPKFSKTHKQNTPWETKWKKIYLPLLLPQQ.

A helical membrane pass occupies residues 8-24; the sequence is TWFITILSMLMTLFILF. Lysine 54 carries the post-translational modification N6-acetyllysine; alternate. At lysine 54 the chain carries N6-succinyllysine; alternate. Lysine 57 carries the post-translational modification N6-acetyllysine.

This sequence belongs to the ATPase protein 8 family. F-type ATPases have 2 components, CF(1) - the catalytic core - and CF(0) - the membrane proton channel. Component of an ATP synthase complex composed of ATP5PB, ATP5MC1, ATP5F1E, ATP5PD, ATP5ME, ATP5PF, ATP5MF, MT-ATP6, MT-ATP8, ATP5F1A, ATP5F1B, ATP5F1D, ATP5F1C, ATP5PO, ATP5MG, ATP5MK and ATP5MJ. Interacts with PRICKLE3.

It is found in the mitochondrion membrane. In terms of biological role, mitochondrial membrane ATP synthase (F(1)F(0) ATP synthase or Complex V) produces ATP from ADP in the presence of a proton gradient across the membrane which is generated by electron transport complexes of the respiratory chain. F-type ATPases consist of two structural domains, F(1) - containing the extramembraneous catalytic core and F(0) - containing the membrane proton channel, linked together by a central stalk and a peripheral stalk. During catalysis, ATP synthesis in the catalytic domain of F(1) is coupled via a rotary mechanism of the central stalk subunits to proton translocation. Part of the complex F(0) domain. Minor subunit located with subunit a in the membrane. The polypeptide is ATP synthase protein 8 (MT-ATP8) (Vicugna pacos (Alpaca)).